We begin with the raw amino-acid sequence, 139 residues long: NAD(P) transhydrogenase subunit alpha part 2 (139 aa).

Transmembrane regions (helical) follow at residues 49–69 (FWWLMTVFVLACFIGFYVVWS), 78–98 (LMGVTNAISSVIVVGALIATG), and 107–127 (VLGFFAILLASVNIFGGFIVT).

In terms of assembly, complex of an alpha and a beta chain; in Rhodospirillum, the alpha chain seems to be made of two subunits.

Its subcellular location is the cell inner membrane. The catalysed reaction is NAD(+) + NADPH + H(+)(in) = NADH + NADP(+) + H(+)(out). Functionally, the transhydrogenation between NADH and NADP is coupled to respiration and ATP hydrolysis and functions as a proton pump across the membrane. The polypeptide is NAD(P) transhydrogenase subunit alpha part 2 (pntAB) (Rhodospirillum rubrum (strain ATCC 11170 / ATH 1.1.1 / DSM 467 / LMG 4362 / NCIMB 8255 / S1)).